The chain runs to 56 residues: Protein SspF (56 aa).

Belongs to the alpha/beta-type SASP family.

Functionally, may play some important role in either sporulation or the dormant spore. This Priestia megaterium (strain ATCC 12872 / QMB1551) (Bacillus megaterium) protein is Protein SspF (sspF).